Reading from the N-terminus, the 373-residue chain is Stationary phase protein 5 (373 aa).

Its function is as follows. Required for survival at high temperature during stationary phase. This chain is Stationary phase protein 5 (SPG5), found in Saccharomyces cerevisiae (strain ATCC 204508 / S288c) (Baker's yeast).